The primary structure comprises 312 residues: tRNA pseudouridine synthase B (312 aa).

D37 functions as the Nucleophile in the catalytic mechanism.

Belongs to the pseudouridine synthase TruB family. Type 1 subfamily.

The catalysed reaction is uridine(55) in tRNA = pseudouridine(55) in tRNA. Its function is as follows. Responsible for synthesis of pseudouridine from uracil-55 in the psi GC loop of transfer RNAs. The protein is tRNA pseudouridine synthase B of Deinococcus geothermalis (strain DSM 11300 / CIP 105573 / AG-3a).